A 215-amino-acid chain; its full sequence is Large ribosomal subunit protein uL3 (215 aa).

The tract at residues 136 to 155 (GVSISHRSHGSTGQRQDPGK) is disordered. Glutamine 151 bears the N5-methylglutamine mark.

It belongs to the universal ribosomal protein uL3 family. Part of the 50S ribosomal subunit. Forms a cluster with proteins L14 and L19. Methylated by PrmB.

One of the primary rRNA binding proteins, it binds directly near the 3'-end of the 23S rRNA, where it nucleates assembly of the 50S subunit. The sequence is that of Large ribosomal subunit protein uL3 from Rickettsia conorii (strain ATCC VR-613 / Malish 7).